We begin with the raw amino-acid sequence, 448 residues long: Probable glycine dehydrogenase (decarboxylating) subunit 1 (448 aa).

This sequence belongs to the GcvP family. N-terminal subunit subfamily. As to quaternary structure, the glycine cleavage system is composed of four proteins: P, T, L and H. In this organism, the P 'protein' is a heterodimer of two subunits.

The catalysed reaction is N(6)-[(R)-lipoyl]-L-lysyl-[glycine-cleavage complex H protein] + glycine + H(+) = N(6)-[(R)-S(8)-aminomethyldihydrolipoyl]-L-lysyl-[glycine-cleavage complex H protein] + CO2. The glycine cleavage system catalyzes the degradation of glycine. The P protein binds the alpha-amino group of glycine through its pyridoxal phosphate cofactor; CO(2) is released and the remaining methylamine moiety is then transferred to the lipoamide cofactor of the H protein. This is Probable glycine dehydrogenase (decarboxylating) subunit 1 from Listeria monocytogenes serotype 4b (strain CLIP80459).